The following is a 308-amino-acid chain: MKIILLFLAALASFTVHAQPPSQTVEQTVRHIYQNYKSDATAPYFGETGERAITSARIQQALTLNDNLTLPGNIGWLDYDPVCDCQDFGDLVLESVAITQTDADHADAVVRFRIFKDDKEKTTQTLKMVAENGRWVIDDIVSNHGSVLQAVNSENEKTLAALASLQKEQPEAFVAELFEHIADYSWPWTWVVSDSYRQAVNAFYKTTFKTANNPDEDMQIERQFIYDNPICFGEESLFSRVDEIRVLEKTADSARIHVRFTLTNGNNEEQELVLQRREGKWEIADFIRPNSGSLLKQIEAKTAARLKQ.

An N-terminal signal peptide occupies residues 1–18 (MKIILLFLAALASFTVHA).

This is an uncharacterized protein from Escherichia coli (strain K12).